The following is a 339-amino-acid chain: MERYEVIKDIGSGNFGVAKLVRDVRTKELFAVKFIERGQKIDENVQREIMNHRSLRHPNIVRFKEVVLTPTHLAIVMEYAAGGELFERICSAGRFSEDEARFFFQQLISGVSYCHSMQICHRDLKLENTLLDGSIAPRLKICDFGYSKSSVLHSQPKSTVGTPAYIAPEVLARKEYDGKVADVWSCGVTLYVMLVGAYPFEDPDEPRNFRKTITRILSVQYMVPDYVRVSMECRHLLSRIFVANPEQRITIPEIKNHPWFLKNLPIEMTDEYQMSVQMNDINTPSQGLEEIMAIIQEARKPGDGSKFSGQIPGLGSMELDDIDTDDIDVEDSGDFVCAL.

One can recognise a Protein kinase domain in the interval 4–260 (YEVIKDIGSG…IPEIKNHPWF (257 aa)). ATP contacts are provided by residues 10–18 (IGSGNFGVA) and Lys33. Catalysis depends on Asp123, which acts as the Proton acceptor. The interval 253–339 (EIKNHPWFLK…EDSGDFVCAL (87 aa)) is C-terminal.

The protein belongs to the protein kinase superfamily. Ser/Thr protein kinase family. Phosphorylated.

The enzyme catalyses L-seryl-[protein] + ATP = O-phospho-L-seryl-[protein] + ADP + H(+). It catalyses the reaction L-threonyl-[protein] + ATP = O-phospho-L-threonyl-[protein] + ADP + H(+). Its function is as follows. May play a role in signal transduction of hyperosmotic response. Can phosphorylate BZIP46 in vitro. In Oryza sativa subsp. indica (Rice), this protein is Serine/threonine-protein kinase SAPK2 (SAPK2).